Here is a 57-residue protein sequence, read N- to C-terminus: Large ribosomal subunit protein bL32 (57 aa).

A disordered region spans residues 1–23 (MAVPARHTSSAKKNRRRTHYKLT). Basic residues predominate over residues 9-20 (SSAKKNRRRTHY).

Belongs to the bacterial ribosomal protein bL32 family.

The polypeptide is Large ribosomal subunit protein bL32 (Lactococcus lactis subsp. cremoris (strain MG1363)).